A 453-amino-acid polypeptide reads, in one-letter code: Glutamyl-tRNA reductase (453 aa).

Substrate is bound by residues 50–53 (TCNR), serine 110, 115–117 (EPQ), and glutamine 121. Catalysis depends on cysteine 51, which acts as the Nucleophile. 190–195 (GAGEMA) serves as a coordination point for NADP(+). The segment covering 423-436 (REKVPTDAHADRKP) has biased composition (basic and acidic residues). A disordered region spans residues 423 to 453 (REKVPTDAHADRKPPNFAETSDDFDVTDASE). The segment covering 442-453 (TSDDFDVTDASE) has biased composition (acidic residues).

Belongs to the glutamyl-tRNA reductase family. As to quaternary structure, homodimer.

The catalysed reaction is (S)-4-amino-5-oxopentanoate + tRNA(Glu) + NADP(+) = L-glutamyl-tRNA(Glu) + NADPH + H(+). The protein operates within porphyrin-containing compound metabolism; protoporphyrin-IX biosynthesis; 5-aminolevulinate from L-glutamyl-tRNA(Glu): step 1/2. Its function is as follows. Catalyzes the NADPH-dependent reduction of glutamyl-tRNA(Glu) to glutamate 1-semialdehyde (GSA). This chain is Glutamyl-tRNA reductase, found in Solidesulfovibrio magneticus (strain ATCC 700980 / DSM 13731 / RS-1) (Desulfovibrio magneticus).